Consider the following 491-residue polypeptide: Probable folate-biopterin transporter 4 (491 aa).

6 helical membrane-spanning segments follow: residues 14 to 34, 52 to 72, 84 to 104, 112 to 132, 154 to 174, and 179 to 199; these read VAFLWLVCLIYFTQGFRSFVW, SQFVFSVAFFPWSIKPLYGII, TPYLVISTVLSLVPWLVLGLD, LYLMIFLTVQNLGSAMADVVI, VSWFAMAVGGVCGSLLGGYAL, and IETIFLLFTVLPALQLLSCAL. A disordered region spans residues 222-262; that stretch reads KSLTSNDNYPDTSKSNTRRRKGQKKGKKGDSNGKSETQKKQ. Polar residues predominate over residues 224-236; that stretch reads LTSNDNYPDTSKS. Over residues 237 to 248 the composition is skewed to basic residues; that stretch reads NTRRRKGQKKGK. Basic and acidic residues predominate over residues 249-260; that stretch reads KGDSNGKSETQK. 6 helical membrane-spanning segments follow: residues 294–314, 323–343, 356–376, 389–411, 437–457, and 461–481; these read MAWFFIAHITVPNLSTVMFYY, AAFLGTARVVGWLGLMFGTFI, SLLFAHIGLSVTILLDMVLVS, MVLFGSALGDAINQLKFMPFLIL, TVGSFMGAGLASLLGISSGSF, and FMGLAIQVFCTYIPVLFLFLI.

This sequence belongs to the major facilitator superfamily. Folate-biopterin transporter (TC 2.A.71) family.

The protein localises to the membrane. Its function is as follows. Could mediate folate transport. The chain is Probable folate-biopterin transporter 4 from Arabidopsis thaliana (Mouse-ear cress).